Reading from the N-terminus, the 349-residue chain is UDP-3-O-acylglucosamine N-acyltransferase 1 (349 aa).

His-241 (proton acceptor) is an active-site residue.

Belongs to the transferase hexapeptide repeat family. LpxD subfamily. Homotrimer.

The enzyme catalyses a UDP-3-O-[(3R)-3-hydroxyacyl]-alpha-D-glucosamine + a (3R)-hydroxyacyl-[ACP] = a UDP-2-N,3-O-bis[(3R)-3-hydroxyacyl]-alpha-D-glucosamine + holo-[ACP] + H(+). It participates in bacterial outer membrane biogenesis; LPS lipid A biosynthesis. In terms of biological role, catalyzes the N-acylation of UDP-3-O-acylglucosamine using 3-hydroxyacyl-ACP as the acyl donor. Is involved in the biosynthesis of lipid A, a phosphorylated glycolipid that anchors the lipopolysaccharide to the outer membrane of the cell. This Gloeobacter violaceus (strain ATCC 29082 / PCC 7421) protein is UDP-3-O-acylglucosamine N-acyltransferase 1.